The following is a 319-amino-acid chain: tRNA uridine(34) hydroxylase (319 aa).

Positions 124–218 (LDEDTVILDA…YGKNEETKGE (95 aa)) constitute a Rhodanese domain. Cys178 functions as the Cysteine persulfide intermediate in the catalytic mechanism.

The protein belongs to the TrhO family.

It carries out the reaction uridine(34) in tRNA + AH2 + O2 = 5-hydroxyuridine(34) in tRNA + A + H2O. Catalyzes oxygen-dependent 5-hydroxyuridine (ho5U) modification at position 34 in tRNAs. This Listeria monocytogenes serovar 1/2a (strain ATCC BAA-679 / EGD-e) protein is tRNA uridine(34) hydroxylase.